Consider the following 192-residue polypeptide: Adenylate kinase (192 aa).

ATP is bound at residue 10–18; it reads GVPGVGGTT.

Belongs to the archaeal adenylate kinase family. In terms of assembly, monomer.

The protein localises to the cytoplasm. It catalyses the reaction AMP + ATP = 2 ADP. The chain is Adenylate kinase from Methanococcus maripaludis (strain C7 / ATCC BAA-1331).